The sequence spans 287 residues: Large ribosomal subunit protein uL2 (287 aa).

Residues 222-266 (RGIRPTVRGSAMNPNDHPHGGGEGRSPVGRDAPRTPWGKRHMGVK) form a disordered region.

It belongs to the universal ribosomal protein uL2 family. Part of the 50S ribosomal subunit. Forms a bridge to the 30S subunit in the 70S ribosome.

Functionally, one of the primary rRNA binding proteins. Required for association of the 30S and 50S subunits to form the 70S ribosome, for tRNA binding and peptide bond formation. It has been suggested to have peptidyltransferase activity; this is somewhat controversial. Makes several contacts with the 16S rRNA in the 70S ribosome. In Mycoplasma pneumoniae (strain ATCC 29342 / M129 / Subtype 1) (Mycoplasmoides pneumoniae), this protein is Large ribosomal subunit protein uL2.